A 151-amino-acid chain; its full sequence is Putative pre-16S rRNA nuclease (151 aa).

The protein belongs to the YqgF nuclease family.

The protein localises to the cytoplasm. Its function is as follows. Could be a nuclease involved in processing of the 5'-end of pre-16S rRNA. This is Putative pre-16S rRNA nuclease from Myxococcus xanthus (strain DK1622).